Here is a 402-residue protein sequence, read N- to C-terminus: Dynactin subunit 2 (402 aa).

The segment at 1 to 24 (MADPKYADLPGIARNEPDVYETSD) is disordered. A2 carries the N-acetylalanine modification. A Phosphotyrosine modification is found at Y6. S83 is subject to Phosphoserine. At Y86 the chain carries Phosphotyrosine. The stretch at 100-130 (QQKYQRLLHEVQELTTEVEKIKTTVKESATE) forms a coiled coil. Phosphothreonine is present on residues T134 and T199. Residues 185–205 (KSSKGSSGGKSTGGTPPDSSL) are disordered. Residues 215–247 (EQDKFSQAAKVAELEKRLTELEATVRCDQDAQN) adopt a coiled-coil conformation. S321 is modified (phosphoserine).

Belongs to the dynactin subunit 2 family. Subunit of dynactin, a multiprotein complex part of a tripartite complex with dynein and a adapter, such as BICDL1, BICD2 or HOOK3. The dynactin complex is built around ACTR1A/ACTB filament and consists of an actin-related filament composed of a shoulder domain, a pointed end and a barbed end. Its length is defined by its flexible shoulder domain. The soulder is composed of 2 DCTN1 subunits, 4 DCTN2 and 2 DCTN3. The 4 DCNT2 (via N-terminus) bind the ACTR1A filament and act as molecular rulers to determine the length. The pointed end is important for binding dynein-dynactin cargo adapters and consists of 4 subunits: ACTR10, DCNT4, DCTN5 and DCTN6. The barbed end is composed of a CAPZA1:CAPZB heterodimers, which binds ACTR1A/ACTB filament and dynactin and stabilizes dynactin. Interacts with BICD2 and CEP135. Interacts with DYNAP. Interacts with ECPAS. Interacts with MAPRE1.

The protein resides in the cytoplasm. Its subcellular location is the cytoskeleton. It localises to the microtubule organizing center. It is found in the centrosome. The protein localises to the membrane. Functionally, part of the dynactin complex that activates the molecular motor dynein for ultra-processive transport along microtubules. In the dynactin soulder domain, binds the ACTR1A filament and acts as a molecular ruler to determine the length. Modulates cytoplasmic dynein binding to an organelle, and plays a role in prometaphase chromosome alignment and spindle organization during mitosis. Involved in anchoring microtubules to centrosomes. May play a role in synapse formation during brain development. The chain is Dynactin subunit 2 (Dctn2) from Rattus norvegicus (Rat).